Here is a 793-residue protein sequence, read N- to C-terminus: MIETLESTQVSHETLRTIDAYWRAANYLSVGQIYLSDNPLLKRPLRIEDVKKMLLGHWGTTPGQNFIYAHLNRTIKQNDLNMIYVSGPGHGGPAVVANTYLEGSYSEIYPHISQDEAGMRKLFVQFSFPGGIPSHASPECPGSIHEGGELGYSLSHSFGAVFDNPDLIVACVVGDGEAETGPLATAWHSNKFLNPATDGAVLPILHLNGFKIANPTILARINHEELEQLMRGYGWTPIFVEGKDPMKMHAAMAEALDVAIGQIRSIQQNARETGDTSRPRWPMIVLRSPKGWTGPKFVDGVRNEGTFHSHQVPLSDPAKCPEHLKQIEQWLRSYRPEELLDENGRLRQEIADLAPTGDRRMGANPHANGGRLLRRLKMPDFRDYAVEISQRGCRGIGDTHVTGKFIRDIVRLNEEHKNFRIFGPDETISNGLEAVFDVTQRQWNAAIVEDDESLAPTGRVLEMLSEHQCEGWLEGYLLTGRHGLFNCYEAFVHIVDSMFNQHAKWLKVTSELPWRHKIASLNYLLASHVWRQDHNGFTHQDPGFLDVVVNKKAEIVRVYLPPDANCLLSVMDHCLRSQHYVNVVVAGKHPSPQWLTMGEAAEHCAKGIGIWDWAGNESSSDPDVVMACCGDVPTLETLAAVSILREHLPDLTIRVVNVVDLMRLQPKSEHPHGLSDSDFDALFTKNKHVIFAFHAYPWLVHRLTYRRTNHANIHVRGYKEEGTITTPFDMTVLNDLDRFHLVMDAIDRLPETGGRGQRLKALMQEKLVEHRRYINENGQDMPEIRDWEWSARS.

Belongs to the XFP family. Requires thiamine diphosphate as cofactor.

The chain is Probable phosphoketolase from Rhodopirellula baltica (strain DSM 10527 / NCIMB 13988 / SH1).